We begin with the raw amino-acid sequence, 1166 residues long: Folliculin-interacting protein 1 (1166 aa).

The uDENN FNIP1/2-type domain occupies 37–478 (FDPSQIRLIV…TVMPNGQPPI (442 aa)). Residues Ser220, Ser230, Ser232, and Ser261 each carry the phosphoserine; by AMPK modification. At Thr294 the chain carries Phosphothreonine. A Phosphoserine modification is found at Ser296. Residues 486-1092 (SSQSVDMLAK…VSNLLHSTLQ (607 aa)) form the cDENN FNIP1/2-type domain. Ser593 carries the phosphoserine; by AMPK modification. Ser594 is modified (phosphoserine). 2 residues coordinate Zn(2+): Cys608 and Cys610. The Cys degron signature appears at 608-615 (CNCKYCSH). The segment at 611–612 (KY) is KY-finger. The Zn(2+) site is built by Cys613 and His615. Ser760 and Ser763 each carry phosphoserine. Disordered stretches follow at residues 781 to 817 (TKPL…VSEE) and 912 to 956 (LVPH…HDMT). Basic and acidic residues-rich tracts occupy residues 783-805 (PLKE…KDQS) and 915-925 (HGDKESSDKKI). The interval 929–1166 (TEWDIPRNES…HSPYVAQILL (238 aa)) is interaction with HSP90AA1. Ser938 is subject to Phosphoserine; alternate; by CK2. O-linked (GlcNAc) serine; alternate glycosylation occurs at Ser938. Residues Ser939, Ser941, Ser946, and Ser948 each carry the phosphoserine; by CK2 modification. Residues 1102-1157 (FCVMHLEDRLQELYFKSKMLSEYLRGQMRVHVKELGVVLGIESSDLPLLAAVASTH) form the dDENN FNIP1/2-type domain. A Glycyl lysine isopeptide (Lys-Gly) (interchain with G-Cter in ubiquitin) cross-link involves residue Lys1119.

It belongs to the FNIP family. As to quaternary structure, homodimer and homomultimer. Heterodimer and heteromultimer with FNIP2. Interacts with FLCN (via C-terminus). Component of the lysosomal folliculin complex (LFC), composed of FLCN, FNIP1 (or FNIP2), RagA/RRAGA or RagB/RRAGB GDP-bound, RagC/RRAGC or RagD/RRAGD GTP-bound, and Ragulator. Interacts with HSPCA and with the PRKAA1, PRKAB1 and PRKAG1 subunits of 5'-AMP-activated protein kinase (AMPK). Phosphorylated FLCN and AMPK are preferentially bound. Interacts with HSP70, STIP1, PTGES3, CDC37, BRAF, GCR and CDK4. Interacts with HSP90AA1; the interaction inhibits HSP90AA1 ATPase activity. Interacts with ATP2A2. Phosphorylated by AMPK in response to energetic stress. Phosphorylation by AMPK in response to mitochondrial damage promotes inactivation of the non-canonical mTORC1 signaling, nuclear translocation of TFEB and TFE3, inducing transcription of lysosomal or autophagy genes. Sequential phosphorylation by CK2 promotes its gradual interaction with HSP90AA1/Hsp90. Priming phosphorylation at Ser-938 is followed by relay phosphorylation at Ser-939, Ser-941, Ser-946 and Ser-948, promoting its gradual interaction with HSP90AA1/Hsp90. This leads to incremental inhibition of HSP90AA1/Hsp90 ATPase activity and gradual activation of both kinase and non-kinase clients. Dephosphorylated by protein phosphatase 5 (PP5), promoting glycosylation by OGT. In terms of processing, glcNAcylation at Ser-938 by OGT following dephosphorylation by protein phosphatase 5 (PP5) promotes ubiquitination and degradation by the proteasome. Post-translationally, ubiquitinated through 'Lys-11' linkage of ubiquitin moieties at Lys-1119 following glycosylation by OGT, leading to its degradation by the proteasome. Ubiquitinated by the CRL2(FEM1B) complex in response to reductive stress: reductive stress causes reduction of the conserved Cys degron in FNIP1, followed by zinc-binding, zinc acting as a molecular glue for recognition by the CRL2(FEM1B) complex. Ubiquitination leads to FNIP1 degradation, and activation of mitochondria to recalibrate reactive oxygen species (ROS). Oxidation of the Cys degron in normal conditions promotes its stabilization by preventing recognition and ubiquitination by the CRL2(FEM1B) complex. In terms of tissue distribution, strong expression is found in the heart, liver placenta, muscle, nasal mucosa, salivary gland and uvula and moderate expression in kidney and lung. Higher levels detected in clear cell renal cell carcinoma (RCC) and chromophobe RCC than in normal kidney tissue. Expressed in peripheral blood mononuclear cells.

It localises to the lysosome membrane. The protein resides in the cytoplasm. Its subcellular location is the cytosol. In terms of biological role, binding partner of the GTPase-activating protein FLCN: involved in the cellular response to amino acid availability by regulating the non-canonical mTORC1 signaling cascade controlling the MiT/TFE factors TFEB and TFE3. Required to promote FLCN recruitment to lysosomes and interaction with Rag GTPases, leading to activation of the non-canonical mTORC1 signaling. In low-amino acid conditions, component of the lysosomal folliculin complex (LFC) on the membrane of lysosomes, which inhibits the GTPase-activating activity of FLCN, thereby inactivating mTORC1 and promoting nuclear translocation of TFEB and TFE3. Upon amino acid restimulation, disassembly of the LFC complex liberates the GTPase-activating activity of FLCN, leading to activation of mTORC1 and subsequent inactivation of TFEB and TFE3. Together with FLCN, regulates autophagy: following phosphorylation by ULK1, interacts with GABARAP and promotes autophagy. In addition to its role in mTORC1 signaling, also acts as a co-chaperone of HSP90AA1/Hsp90: following gradual phosphorylation by CK2, inhibits the ATPase activity of HSP90AA1/Hsp90, leading to activate both kinase and non-kinase client proteins of HSP90AA1/Hsp90. Acts as a scaffold to load client protein FLCN onto HSP90AA1/Hsp90. Competes with the activating co-chaperone AHSA1 for binding to HSP90AA1, thereby providing a reciprocal regulatory mechanism for chaperoning of client proteins. Also acts as a core component of the reductive stress response by inhibiting activation of mitochondria in normal conditions: in response to reductive stress, the conserved Cys degron is reduced, leading to recognition and polyubiquitylation by the CRL2(FEM1B) complex, followed by proteasomal. Required for B-cell development. This chain is Folliculin-interacting protein 1, found in Homo sapiens (Human).